An 81-amino-acid polypeptide reads, in one-letter code: Omega-conotoxin-like TxMKLT1-0223 (81 aa).

The N-terminal stretch at 1–22 (MKLTCMMIVAVLFLTAWTFVTA) is a signal peptide. A propeptide spanning residues 23–52 (VPHSSNALENLYLKARHEMENPEASKLNTR) is cleaved from the precursor. Intrachain disulfides connect Cys55–Cys72, Cys62–Cys76, and Cys71–Cys80.

This sequence belongs to the conotoxin O1 superfamily. Expressed by the venom duct.

The protein resides in the secreted. Omega-conotoxins act at presynaptic membranes, they bind and block voltage-gated calcium channels (Cav). The polypeptide is Omega-conotoxin-like TxMKLT1-0223 (Conus textile (Cloth-of-gold cone)).